We begin with the raw amino-acid sequence, 110 residues long: NADH-quinone oxidoreductase subunit K (110 aa).

The next 3 helical transmembrane spans lie at 13-33, 41-61, and 73-93; these read LNHY…GLFM, ILMS…AFSV, and IIIL…LLIY.

The protein belongs to the complex I subunit 4L family. NDH-1 is composed of 14 different subunits. Subunits NuoA, H, J, K, L, M, N constitute the membrane sector of the complex.

It is found in the cell inner membrane. It carries out the reaction a quinone + NADH + 5 H(+)(in) = a quinol + NAD(+) + 4 H(+)(out). In terms of biological role, NDH-1 shuttles electrons from NADH, via FMN and iron-sulfur (Fe-S) centers, to quinones in the respiratory chain. The immediate electron acceptor for the enzyme in this species is believed to be ubiquinone. Couples the redox reaction to proton translocation (for every two electrons transferred, four hydrogen ions are translocated across the cytoplasmic membrane), and thus conserves the redox energy in a proton gradient. The polypeptide is NADH-quinone oxidoreductase subunit K (Rickettsia prowazekii (strain Madrid E)).